Consider the following 911-residue polypeptide: Disks large homolog 1 (911 aa).

The region spanning 4 to 64 (RKQDTQRALH…FYEVTLLDNP (61 aa)) is the L27 domain. S39 is subject to Phosphoserine; by CaMK2. Residues 70–105 (SKQCEPVQPGNPWESGSLSSAAVTSESLPGGLSPPV) form a disordered region. The segment covering 83-96 (ESGSLSSAAVTSES) has biased composition (polar residues). Residues S122, S138, and S158 each carry the phosphoserine modification. An interaction with SH3 domains region spans residues 162-212 (PTEAVPPSSPIVPVTPALPVPAESPVVLPSTPQANPPPVLVNTDSLETPTY). 2 PDZ domains span residues 224–310 (EITL…VKRR) and 318–404 (EIKL…AAKP). The tract at residues 224–545 (EITLERGNSG…QAVTIVAQYR (322 aa)) is required for interaction with MARCHF2. Residue S232 is modified to Phosphoserine; by CaMK2. Y398 carries the post-translational modification Phosphotyrosine. Residues 419–441 (TNSSSQSVDNHVSPSSYLGQTPA) show a composition bias toward polar residues. Residues 419 to 443 (TNSSSQSVDNHVSPSSYLGQTPASP) form a disordered region. Positions 465–545 (KVVLHRGSTG…QAVTIVAQYR (81 aa)) constitute a PDZ 3 domain. Phosphoserine occurs at positions 567, 572, 574, 578, 597, 618, 684, 687, and 841. Residues 580 to 650 (KRSLYVRALF…PSKRRVEKKE (71 aa)) enclose the SH3 domain. Residues 662 to 696 (KTRGDKGEIPDDMGSKGLKHVTSNASDSESSYHEY) form a disordered region. Positions 721–896 (TRPVIILGPM…IYNQVKQIIE (176 aa)) constitute a Guanylate kinase-like domain.

It belongs to the MAGUK family. Homotetramer. Interacts (via guanylate kinase-like domain) with DLGAP1, DLGAP2, DLGAP3, DLGAP4 and MAP1A. Interacts (via guanylate kinase-like domain) with KIF13B. May interact with HTR2A. Interacts (via PDZ domains) with GRIA1. Interacts (via PDZ domains) with GRIN2A. Interacts (via PDZ domains) with KCND2 and KCND3. Interacts (via PDZ domains) with KCNA1, KCNA2, KCNA3 and KCNA4. Interacts (via PDZ domains) with ADGRA3. Interacts with KCNF1. Interacts with CAMK2. Interacts with cytoskeleton-associated protein EPB41. Interacts with cytoskeleton-associated protein EZR. Found in a complex with KCNA5 and CAV3. Found in a complex with APC and CTNNB1. Interacts (via PDZ domains) with APC. Interacts with CDH1 through binding to PIK3R1. Forms multiprotein complexes with CASK, LIN7A, LIN7B, LIN7C, APBA1, and KCNJ12. Interacts with TOPK. Forms a tripartite complex composed of DLG1, MPP7 and LIN7 (LIN7A or LIN7C). May interact with TJAP1. Interacts with PTEN. Interacts with FRMPD4 (via C-terminus). Interacts with LRFN1 and LRFN2. Interacts with LRFN4 and SFPQ. Interacts (via PDZ domains) with ADGRA2 (via PDZ-binding motif). Interacts with ADAM10; this interaction recruits ADAM10 to the cell membrane during long-term depression in hippocampal neurons. Interacts with DGKI (via PDZ-binding motif). Interacts (via PDZ domains) with MARCHF2 (via PDZ domain); the interaction leads to DLG1 ubiqtuitination and degradation. Interacts (via N-terminus) with MPP3; this interaction connects CADM1 with DLG1 and links CADM1 with the regulatory subunit of phosphoinositide-3-kinase (PI3K) by forming a multiprotein complex and participates in cell spreading. Post-translationally, phosphorylated by MAPK12. Phosphorylation of Ser-39 modulates transport to the plasma membrane. Phosphorylation of Ser-232 regulates association with GRIN2A. Ubiquitinated; by MARCHF2 which results in its degradation. As to expression, widely expressed. Strongly expressed in epithelial cells, in the small intestine it is only detected in the vili. Expressed in brain, heart (at protein level), muscle, lung and liver. In the brain it was detected in olfactory bulbs, cerebral cortex, hippocampus, and spinal cord (at protein level).

It is found in the cell membrane. The protein resides in the basolateral cell membrane. The protein localises to the endoplasmic reticulum membrane. It localises to the postsynaptic density. Its subcellular location is the synapse. It is found in the sarcolemma. The protein resides in the cell junction. The protein localises to the cytoplasm. It localises to the apical cell membrane. Essential multidomain scaffolding protein required for normal development. Recruits channels, receptors and signaling molecules to discrete plasma membrane domains in polarized cells. Promotes epithelial cell layer barrier function via maintaining cell-cell adhesion. May play a role in adherens junction assembly, signal transduction, cell proliferation, synaptogenesis and lymphocyte activation. Regulates the excitability of cardiac myocytes by modulating the functional expression of Kv4 channels. Functional regulator of Kv1.5 channel. During long-term depression in hippocampal neurons, it recruits ADAM10 to the plasma membrane. This is Disks large homolog 1 from Rattus norvegicus (Rat).